Consider the following 558-residue polypeptide: Two-component response regulator-like APRR5 (558 aa).

The Response regulatory domain maps to 51–169 (RVLLVEADDS…ELRNLWQHVW (119 aa)). The tract at residues 180–233 (FPWNESVGQQKAEGASANNSNGKRDDHVVSGNGGDAQSSCTRPEMEGESADVEV) is disordered. The stretch at 240 to 260 (QMECAKSQFNETRLLANELQS) forms a coiled coil. Disordered stretches follow at residues 297-319 (SLRRPNASENQSSGDRPSLHPSS) and 535-558 (KKLAEQRPRIKGQFVRQVQSTQAP). The segment covering 303–319 (ASENQSSGDRPSLHPSS) has biased composition (polar residues). The region spanning 509–551 (REAALTKFRMKRKDRCYEKKVRYESRKKLAEQRPRIKGQFVRQ) is the CCT domain.

It belongs to the ARR-like family. In terms of assembly, interacts with ADO1 and ADO2. Interacts with SPY (via N-terminus). In terms of processing, phosphorylation varies throughout the diurnal cycle and enhances ADO1 binding. O-fucosylated by SPY. O-fucosylation promotes APRR5 proteolysis.

It is found in the nucleus. Functionally, transcriptional repressor of CCA1 and LHY, thereby controlling photoperiodic flowering response. Involved in the positive and negative feedback loops of the circadian clock. With RVE8, forms a negative feedback loop of the circadian clock. Expression of several members of the ARR-like family is controlled by circadian rhythm. Proteolytic substrate of the E3 ubiquitin ligase SCF(ADO1) complex. APRR9, APRR7, and APRR5 coordinately act on the upstream region of the target genes to repress their expression from noon until midnight. The particular coordinated sequential expression of APRR9, APRR7, APRR5, APRR3 and APPR1 result to circadian waves that may be at the basis of the endogenous circadian clock. Negative regulator of shade avoidance response. Involved in the inhibition of leaf expansion in shade avoidance response. The sequence is that of Two-component response regulator-like APRR5 (APRR5) from Arabidopsis thaliana (Mouse-ear cress).